The primary structure comprises 65 residues: Potassium channel toxin kappa-KTx 2.7 (65 aa).

The signal sequence occupies residues 1–26 (MKTSGTVYVFLLLLAFGIFTDISSAC). A propeptide spanning residues 27-39 (SEQMDDEDSYEVE) is cleaved from the precursor. 2 disulfide bridges follow: Cys-45/Cys-63 and Cys-49/Cys-59.

This sequence belongs to the short scorpion toxin superfamily. Potassium channel inhibitor kappa-KTx family. Kappa-KTx 2 subfamily. Expressed by the venom gland.

Its subcellular location is the secreted. Its function is as follows. Weakly inhibits the Kv7.1/KCNQ1 channel (10 uM of the toxin inhibits currents by 17.8%). The sequence is that of Potassium channel toxin kappa-KTx 2.7 from Heterometrus petersii (Asian forest scorpion).